The sequence spans 419 residues: Glutamate-1-semialdehyde 2,1-aminomutase (419 aa).

K259 is modified (N6-(pyridoxal phosphate)lysine).

It belongs to the class-III pyridoxal-phosphate-dependent aminotransferase family. HemL subfamily. It depends on pyridoxal 5'-phosphate as a cofactor.

It is found in the cytoplasm. The enzyme catalyses (S)-4-amino-5-oxopentanoate = 5-aminolevulinate. It functions in the pathway porphyrin-containing compound metabolism; protoporphyrin-IX biosynthesis; 5-aminolevulinate from L-glutamyl-tRNA(Glu): step 2/2. The chain is Glutamate-1-semialdehyde 2,1-aminomutase (hemL) from Sulfurisphaera tokodaii (strain DSM 16993 / JCM 10545 / NBRC 100140 / 7) (Sulfolobus tokodaii).